The primary structure comprises 457 residues: MALWGGRFSQAADQRFKQFNDSLRFDYRLAEQDIIGSVAWSKALVTVGVLNADEQQQLEQALSVLLEEVQANPHAILASDAEDIHSWVETKLIDKVGDLGKKLHTGRSRNDQVATDLKLWCKFQITELQTAVQQLQQALVMTAEANQDAVMPGYTHLQRAQPVTFAHWCLAYVEMLSRDESRLQDTLKRLDVSPLGCGALAGTAYAIDREQLAGWLGFASATRNSLDSVSDRDHVLELLSDASIGMVHLSRFAEDLIFFNSGEAAFVDLSDRVTSGSSLMPQKKNPDALELIRGKCGRVQGALTGMTMTLKGLPLAYNKDMQEDKEGLFDALDTWLDCLHMAALVLDGIQVKRPRCKEAAEQGYANATELADYLVAKGVPFREAHHIVGEAVVEAIRQGKALEALALSDLQQFSSVIGDDVYPILALQSCLDKRVAKGGVSPQQVASAIAEAKARLF.

Belongs to the lyase 1 family. Argininosuccinate lyase subfamily.

Its subcellular location is the cytoplasm. The catalysed reaction is 2-(N(omega)-L-arginino)succinate = fumarate + L-arginine. It functions in the pathway amino-acid biosynthesis; L-arginine biosynthesis; L-arginine from L-ornithine and carbamoyl phosphate: step 3/3. The sequence is that of Argininosuccinate lyase from Yersinia pseudotuberculosis serotype O:1b (strain IP 31758).